We begin with the raw amino-acid sequence, 280 residues long: Phosphonates import ATP-binding protein PhnC (280 aa).

The 244-residue stretch at 2 to 245 (FELKNVTRRF…AVKEIYGTDK (244 aa)) folds into the ABC transporter domain. 34-41 (GRSGAGKS) is an ATP binding site. Residues 257 to 280 (TSLESKRRAEDVSSGRVAKAAAVH) form a disordered region. Basic and acidic residues predominate over residues 260-269 (ESKRRAEDVS).

The protein belongs to the ABC transporter superfamily. Phosphonates importer (TC 3.A.1.9.1) family. In terms of assembly, the complex is composed of two ATP-binding proteins (PhnC), two transmembrane proteins (PhnE) and a solute-binding protein (PhnD).

It localises to the cell inner membrane. The catalysed reaction is phosphonate(out) + ATP + H2O = phosphonate(in) + ADP + phosphate + H(+). Part of the ABC transporter complex PhnCDE involved in phosphonates import. Responsible for energy coupling to the transport system. The sequence is that of Phosphonates import ATP-binding protein PhnC from Rhizobium johnstonii (strain DSM 114642 / LMG 32736 / 3841) (Rhizobium leguminosarum bv. viciae).